The primary structure comprises 481 residues: 6-phosphogluconate dehydrogenase, decarboxylating (481 aa).

Residues 11-16, 34-36, 76-78, and Asn-104 each bind NADP(+); these read GLAVMG, NRT, and VKA. Residues Asn-104 and 130–132 contribute to the substrate site; that span reads SGG. The active-site Proton acceptor is the Lys-184. Residue 187 to 188 participates in substrate binding; the sequence is HN. Residue Glu-191 is the Proton donor of the active site. Residues Tyr-192, Lys-259, Arg-286, Arg-445, and His-451 each contribute to the substrate site.

Belongs to the 6-phosphogluconate dehydrogenase family. In terms of assembly, homodimer.

It carries out the reaction 6-phospho-D-gluconate + NADP(+) = D-ribulose 5-phosphate + CO2 + NADPH. Its pathway is carbohydrate degradation; pentose phosphate pathway; D-ribulose 5-phosphate from D-glucose 6-phosphate (oxidative stage): step 3/3. Its function is as follows. Catalyzes the oxidative decarboxylation of 6-phosphogluconate to ribulose 5-phosphate and CO(2), with concomitant reduction of NADP to NADPH. The protein is 6-phosphogluconate dehydrogenase, decarboxylating (Pgd) of Ceratitis capitata (Mediterranean fruit fly).